The chain runs to 342 residues: Voltage-gated hydrogen channel 1 (342 aa).

Disordered regions lie at residues 1 to 20 and 74 to 102; these read MEGD…INPN and FNDN…SEQK. Residues 1 to 148 lie on the Cytoplasmic side of the membrane; the sequence is MEGDNCNKSR…KLRHILHSKP (148 aa). A compositionally biased stretch (polar residues) spans 86 to 102; sequence QEQSTQNTMISMQSEQK. A helical transmembrane segment spans residues 149-169; sequence IHVAIIVLVVLDSFLVVGELL. The Extracellular segment spans residues 170-185; the sequence is IDLKVIIVPHGNPAPE. Residues 186-208 traverse the membrane as a helical segment; it reads ILHGFSLSILSIFMVEIALKIIA. Over 209–217 the chain is Cytoplasmic; the sequence is DHRHFIHHK. A helical membrane pass occupies residues 218-238; that stretch reads VEVLDAVVVVISFGVDIALIF. Residues 239–247 are Extracellular-facing; that stretch reads VGESEALAA. A helical membrane pass occupies residues 248–268; sequence IGLLVILRLWRVFRIINGIIV. The Cytoplasmic portion of the chain corresponds to 269–342; sequence TVKTKADDRV…HSTTTASADV (74 aa). A coiled-coil region spans residues 271 to 315; sequence KTKADDRVHEIKKKNSELELQIHNLEEKLSQKEQDMSRLHEILRC.

Belongs to the hydrogen channel family. As to quaternary structure, homodimer.

It localises to the membrane. It is found in the cell membrane. Less sensitive to zinc ions as compared to the mammalian homologs. In terms of biological role, mediates the voltage-dependent proton permeability of excitable membranes. Forms a proton-selective channel through which protons may pass in accordance with their electrochemical gradient. The sequence is that of Voltage-gated hydrogen channel 1 (HVCN1) from Ciona intestinalis (Transparent sea squirt).